A 311-amino-acid chain; its full sequence is Aquaporin-1 (311 aa).

Over 1-16 (MHPQVASLFDNVYEDL) the chain is Cytoplasmic. The chain crosses the membrane as a helical span at residues 17 to 37 (AAATLEFIGTAFFLLFGLGGI). Residues 38–56 (QASTAEDTASSQPPASGIE) lie on the Extracellular side of the membrane. A helical transmembrane segment spans residues 57–77 (HVLYISTCMGFSLVVSAWLFF). R78 is a topological domain (cytoplasmic). Residues 79–99 (VTGGLFNPNISFALLLVGGLK) traverse the membrane as a helical segment. Positions 85–87 (NPN) match the NPA 1 motif. Position 100 (P100) is a topological domain, extracellular. Residues 101–121 (LRFVLFCIAQLTGAIAGAAIV) form a helical membrane-spanning segment. Residues 122–143 (RGLTSAPLSVNNVLQQGTSAAQ) are Cytoplasmic-facing. A helical transmembrane segment spans residues 144–164 (GVFIEMFITAALVLSVLMLAA). Residues 165–168 (EKHE) lie on the Extracellular side of the membrane. Residues 169–189 (ATPFAPVGIGLTLFACHLFAV) form a helical membrane-spanning segment. Residues 190 to 215 (YYTGAAMNSARAFGPAVISGFPEPQH) are Cytoplasmic-facing. An NPA 2 motif is present at residues 197 to 199 (NSA). Residues 216-236 (WVYWVGPFLGSLLGAGFYATL) traverse the membrane as a helical segment. At 237-311 (KHYKYWRLNP…TSSRTNFSPV (75 aa)) the chain is on the extracellular side. The disordered stretch occupies residues 276-311 (DEETRNGCASNEEGVRATGDEKSSNATSSRTNFSPV). Residues 288–298 (EGVRATGDEKS) show a composition bias toward basic and acidic residues. Residues 299–311 (SNATSSRTNFSPV) show a composition bias toward polar residues. A glycan (N-linked (GlcNAc...) asparagine) is linked at N300.

The protein belongs to the MIP/aquaporin (TC 1.A.8) family.

Its subcellular location is the cell membrane. It catalyses the reaction H2O(in) = H2O(out). The catalysed reaction is H2O2(out) = H2O2(in). It carries out the reaction nitric oxide(out) = nitric oxide(in). The enzyme catalyses CO2(out) = CO2(in). Water channel required to facilitate the transport of water across membranes. Also mediates the transport nitric oxide, hydrogen peroxide and carbon dioxide across the membrane. Required for Hartig net development in trembling aspen trees. Contributes in fungal cellular processes during the basidiocarp formation. This chain is Aquaporin-1, found in Laccaria bicolor (Bicoloured deceiver).